Reading from the N-terminus, the 275-residue chain is NH(3)-dependent NAD(+) synthetase (275 aa).

46–53 (GISGGQDS) contacts ATP. Mg(2+) is bound at residue D52. R140 contacts deamido-NAD(+). Position 160 (T160) interacts with ATP. E165 serves as a coordination point for Mg(2+). K173 and D180 together coordinate deamido-NAD(+). Residues K189 and T211 each coordinate ATP. 260 to 261 (HK) is a binding site for deamido-NAD(+).

This sequence belongs to the NAD synthetase family. Homodimer.

The catalysed reaction is deamido-NAD(+) + NH4(+) + ATP = AMP + diphosphate + NAD(+) + H(+). It functions in the pathway cofactor biosynthesis; NAD(+) biosynthesis; NAD(+) from deamido-NAD(+) (ammonia route): step 1/1. Catalyzes the ATP-dependent amidation of deamido-NAD to form NAD. Uses ammonia as a nitrogen source. This chain is NH(3)-dependent NAD(+) synthetase, found in Salmonella heidelberg (strain SL476).